The chain runs to 221 residues: Protein-L-isoaspartate O-methyltransferase (221 aa).

Ser60 is an active-site residue.

This sequence belongs to the methyltransferase superfamily. L-isoaspartyl/D-aspartyl protein methyltransferase family.

The protein localises to the cytoplasm. The enzyme catalyses [protein]-L-isoaspartate + S-adenosyl-L-methionine = [protein]-L-isoaspartate alpha-methyl ester + S-adenosyl-L-homocysteine. Its function is as follows. Catalyzes the methyl esterification of L-isoaspartyl residues in peptides and proteins that result from spontaneous decomposition of normal L-aspartyl and L-asparaginyl residues. It plays a role in the repair and/or degradation of damaged proteins. This Rhodospirillum centenum (strain ATCC 51521 / SW) protein is Protein-L-isoaspartate O-methyltransferase.